A 141-amino-acid polypeptide reads, in one-letter code: uncharacterized protein (141 aa).

This is an uncharacterized protein from Acheta domesticus (House cricket).